The sequence spans 1304 residues: Zinc finger CCCH domain-containing protein 4 (1304 aa).

Positions methionine 1 to serine 33 are enriched in pro residues. Residues methionine 1–serine 387 are disordered. The segment covering aspartate 53–glutamine 73 has biased composition (acidic residues). Residues glutamate 80 to serine 99 are compositionally biased toward basic and acidic residues. Phosphoserine occurs at positions 92 and 94. Positions serine 94–arginine 128 form a coiled coil. Over residues histidine 100 to alanine 130 the composition is skewed to basic residues. Residues aspartate 135–aspartate 144 show a composition bias toward acidic residues. Tyrosine 155 carries the post-translational modification Phosphotyrosine. Positions serine 165–asparagine 174 are enriched in polar residues. Residues glutamate 194–aspartate 218 show a composition bias toward acidic residues. Positions aspartate 219–serine 235 are enriched in basic and acidic residues. The segment covering arginine 238–glycine 251 has biased composition (basic residues). The span at serine 252 to glycine 264 shows a compositional bias: gly residues. Residues proline 277–aspartate 303 show a composition bias toward acidic residues. The span at aspartate 304–glycine 320 shows a compositional bias: basic and acidic residues. The span at glycine 322 to glycine 346 shows a compositional bias: basic residues. Residues asparagine 357–glycine 368 are compositionally biased toward acidic residues. The segment covering arginine 376 to serine 387 has biased composition (basic and acidic residues). 3 consecutive C3H1-type zinc fingers follow at residues lysine 389 to glutamate 416, proline 418 to phenylalanine 445, and proline 446 to leucine 469. Over residues alanine 485 to valine 495 the composition is skewed to acidic residues. The tract at residues alanine 485–glutamine 567 is disordered. Pro residues-rich tracts occupy residues leucine 506–threonine 529 and glycine 538–methionine 556. Arginine 599 is subject to Asymmetric dimethylarginine. 3 disordered regions span residues proline 601 to histidine 691, proline 719 to lysine 970, and leucine 994 to glutamine 1304. The span at proline 603–methionine 622 shows a compositional bias: pro residues. The segment covering proline 628–proline 660 has biased composition (basic and acidic residues). Residues asparagine 669–proline 683 show a composition bias toward pro residues. Positions alanine 778–glycine 809 form a coiled coil. Basic and acidic residues predominate over residues glutamine 787 to arginine 804. Phosphoserine occurs at positions 816 and 817. The span at serine 824–glycine 852 shows a compositional bias: polar residues. Positions serine 869–glutamate 884 are enriched in basic and acidic residues. Residues serine 913, serine 916, and serine 917 each carry the phosphoserine modification. Positions serine 913–proline 929 are enriched in low complexity. Residues leucine 994–proline 1005 are compositionally biased toward pro residues. 2 stretches are compositionally biased toward polar residues: residues asparagine 1028–asparagine 1044 and valine 1058–glutamate 1067. Residues lysine 1068–lysine 1085 show a composition bias toward basic and acidic residues. Composition is skewed to low complexity over residues proline 1098–alanine 1129 and serine 1137–glycine 1146. Phosphoserine occurs at positions 1104, 1109, 1111, and 1115. Threonine 1119 bears the Phosphothreonine mark. Over residues lysine 1204–asparagine 1220 the composition is skewed to polar residues. Positions lysine 1225–serine 1235 are enriched in low complexity. A phosphoserine mark is found at serine 1270 and serine 1276.

Belongs to the suppressor of sable family. In terms of assembly, interacts with WDR82.

It localises to the chromosome. In terms of biological role, RNA-binding protein that suppresses transcription of long non-coding RNAs (lncRNAs). LncRNAs are defined as transcripts more than 200 nucleotides that are not translated into protein. Together with WDR82, part of a transcription termination checkpoint that promotes transcription termination of lncRNAs and their subsequent degradation by the exosome. The transcription termination checkpoint is activated by the inefficiently spliced first exon of lncRNAs. The polypeptide is Zinc finger CCCH domain-containing protein 4 (Mus musculus (Mouse)).